Consider the following 245-residue polypeptide: DNA terminal protein (245 aa).

The Nuclear localization signal signature appears at 4–55 (KRLKKKLETKRKKSLLVSEGYSKKETKKLKGRELETVYKKKAHNRKNRERAR). Tyrosine 194 carries the O-(5'-phospho-DNA)-tyrosine modification.

In terms of assembly, interacts with the DNA-binding protein P1.

It localises to the virion. Acts as a primer for viral genomic replication. DNA terminal protein is covalently linked to the 5'-ends of both strands of the genome through a phosphodiester bond between the beta-hydroxyl group of a tyrosine residue and the 5'-phosphate of the terminal deoxythymidylate. This protein is essential for DNA replication and is involved in the priming of DNA elongation. The chain is DNA terminal protein from Bacillus thuringiensis (Bacillus thuringiensis bacteriophage Bam35c).